The sequence spans 789 residues: Phenylalanine--tRNA ligase beta subunit (789 aa).

Residues 39-149 (ADGLEAFRIA…HEAPVGQSYV (111 aa)) enclose the tRNA-binding domain. One can recognise a B5 domain in the interval 399-471 (SAVPVISYDP…RIEGLDNVPS (73 aa)). Mg(2+) is bound by residues aspartate 449, aspartate 455, and aspartate 459. Residues 696 to 788 (SMLQPVFRDF…AAAKKGARLR (93 aa)) enclose the FDX-ACB domain.

It belongs to the phenylalanyl-tRNA synthetase beta subunit family. Type 1 subfamily. Tetramer of two alpha and two beta subunits. The cofactor is Mg(2+).

It is found in the cytoplasm. The enzyme catalyses tRNA(Phe) + L-phenylalanine + ATP = L-phenylalanyl-tRNA(Phe) + AMP + diphosphate + H(+). This Zymomonas mobilis subsp. mobilis (strain ATCC 31821 / ZM4 / CP4) protein is Phenylalanine--tRNA ligase beta subunit.